Reading from the N-terminus, the 200-residue chain is UPF0316 protein SAUSA300_1892 (200 aa).

3 helical membrane-spanning segments follow: residues 8–28, 40–60, and 66–86; these read PWLM…FLTM, IAAS…GLVM, and IQNI…GMKI.

The protein belongs to the UPF0316 family.

It is found in the cell membrane. In Staphylococcus aureus (strain USA300), this protein is UPF0316 protein SAUSA300_1892.